The primary structure comprises 404 residues: CCA-adding enzyme (404 aa).

Residues Gly32 and Arg35 each contribute to the ATP site. CTP is bound by residues Gly32 and Arg35. Residues Asp45 and Asp47 each coordinate Mg(2+). 5 residues coordinate ATP: Arg116, Asp159, Arg162, Arg165, and Arg168. Positions 116, 159, 162, 165, and 168 each coordinate CTP.

This sequence belongs to the tRNA nucleotidyltransferase/poly(A) polymerase family. Bacterial CCA-adding enzyme type 3 subfamily. In terms of assembly, homodimer. Mg(2+) is required as a cofactor.

It carries out the reaction a tRNA precursor + 2 CTP + ATP = a tRNA with a 3' CCA end + 3 diphosphate. The enzyme catalyses a tRNA with a 3' CCA end + 2 CTP + ATP = a tRNA with a 3' CCACCA end + 3 diphosphate. Catalyzes the addition and repair of the essential 3'-terminal CCA sequence in tRNAs without using a nucleic acid template. Adds these three nucleotides in the order of C, C, and A to the tRNA nucleotide-73, using CTP and ATP as substrates and producing inorganic pyrophosphate. tRNA 3'-terminal CCA addition is required both for tRNA processing and repair. Also involved in tRNA surveillance by mediating tandem CCA addition to generate a CCACCA at the 3' terminus of unstable tRNAs. While stable tRNAs receive only 3'-terminal CCA, unstable tRNAs are marked with CCACCA and rapidly degraded. In Ligilactobacillus salivarius (strain UCC118) (Lactobacillus salivarius), this protein is CCA-adding enzyme.